The sequence spans 572 residues: MARSLLKIHRYFRRKPVRFFSFILLYLTAGSLVFLHSGFSSDSSTAGIAGSGSDPLLSEGRGGTGGGSATSEGLGLLGRVFKETRRTPRRFGPPWMKESRGQDAPEWAGRGFDHTSSWSHGAKGRTTKEMDDGRAKYIGCYVDDTQKRALRGVSFLDYKKMTVFRCQDNCAERGYLYAGLEFGAECYCGHKIQAPNVSESECNMECKGEKSNLCGGPNRLSIYRLELSQESARRYGSAIFKGCFRRPDNVTLALPASAVMQNMSVDKCVDMCTEKEFSLAALAGDKCHCGFPTPLFNLHEHEDEELCLHRCTGEDFESCGNRDFFVVYQTQVQDNRCMDRRFLPTRSKHLMALASFPGAGNTWARHLIELATGYYTGSYYFDGSLYNKGFKGERDHWRSGRTICIKTHESGKKEIETFDASILMIRNPYKALMAEFNRKYGGHIGFASQAHWRGKEWPEFVKNYAPWWASHTLDWLKYGKKVQVVHFEDLKRDLFSQLKGMVIFLGLEVSEDRLLCVEGQKDGNFKRSGLRKLEYDPYTVEMRATIDRLIKTVDMELRKRNLSGVPDEYRPR.

Over 1–18 (MARSLLKIHRYFRRKPVR) the chain is Cytoplasmic. Residues 19 to 39 (FFSFILLYLTAGSLVFLHSGF) form a helical; Signal-anchor for type II membrane protein membrane-spanning segment. The Extracellular segment spans residues 40–572 (SSDSSTAGIA…SGVPDEYRPR (533 aa)). WSC domains are found at residues 134-226 (RAKY…YRLE) and 237-331 (SAIF…YQTQ). 4 N-linked (GlcNAc...) asparagine glycosylation sites follow: asparagine 196, asparagine 249, asparagine 262, and asparagine 561.

It belongs to the WSCD family.

The protein localises to the golgi apparatus membrane. Sialate:O-sulfotransferase which catalyzes 8-O-sulfation at the Sia-glycan level using 3'-phosphoadenosine 5'-phosphosulfate (PAPS) as a donor, forming 8-O-sulfated Sia (Sia8S)-glycans. This is Sialate:O-sulfotransferase 2 (wscd2) from Danio rerio (Zebrafish).